The chain runs to 400 residues: WD repeat and FYVE domain-containing protein 2 (400 aa).

WD repeat units follow at residues 22–61, 66–105, 112–150, 153–192, 197–236, and 240–279; these read GSQEVVNMAVIVPKEEGVISVSEDRTVRVWLKRDSGQYWP, AMPSPCSCMSFNPETRRLSIGLDNGTISEFILSEDYNKMT, AHQSRVTMVLFVLELEWVLSTGQDKQFAWHCSESGQRLG, RTSAVASGLQFDVETRHVFIGDHSGQVTILKLEQENCTLL, GHTGGVTALCWDPVQRVLFSGSSDHSVIMWDIGGRKGTAI, and GHNDKVQALSYAQHTRQLISCGGDGGIVVWNMDVERQETP. An FYVE-type zinc finger spans residues 281–352; the sequence is WLDSDSCQKC…VCDSCHEAIT (72 aa). Zn(2+)-binding residues include Cys287, Cys290, Cys314, Cys317, Cys322, Cys325, Cys344, and Cys347. One copy of the WD 7 repeat lies at 364 to 399; sequence DSKHNIVHVHFDATRGWLLTSGTDKVIKLWDMTPVV.

In terms of assembly, homodimer. Interacts (via WD repeats 1-3) with AKT1, AKT2, PRKCZ and PRKCI. Interacts with VAMP2. Forms a complex with VAMP2 and PRKCZ. Interacts with FOXO1. Forms a complex with AKT1 and FOXO1. Highly expressed in the brain (at protein level).

It is found in the endosome. The protein resides in the early endosome. The protein localises to the cytoplasm. Acts in an adapter protein-like fashion to mediate the interaction between the kinase PRKCZ and its substrate VAMP2 and increases the PRKCZ-dependent phosphorylation of VAMP2. Positively regulates adipocyte differentiation, by facilitating the phosphorylation and thus inactivation of the anti-adipogenetic transcription factor FOXO1 by the kinase AKT1. Plays a role in endosomal control of AKT2 signaling; required for insulin-stimulated AKT2 phosphorylation and glucose uptake and insulin-stimulated phosphorylation of AKT2 substrates. Participates in transferrin receptor endocytosis. The polypeptide is WD repeat and FYVE domain-containing protein 2 (Wdfy2) (Mus musculus (Mouse)).